Consider the following 125-residue polypeptide: Protein ApaG (125 aa).

An ApaG domain is found at methionine 1–histidine 125.

This is Protein ApaG from Cronobacter sakazakii (strain ATCC BAA-894) (Enterobacter sakazakii).